The following is a 194-amino-acid chain: MALPSSFLVALVALGCNSVCSLGCDLPQTHGLLNRRALTLLGQMRRLPASSCQKDRNDFAFPQDVFGGDQSHKAQALSVVHVTNQKIFHFFCTEASSSAAWNTTLLEEFCTGLDRQLTRLEACVLQEVEEGEAPLTNEDIHPEDSILRNYFQRLSLYLQEKKYSPCAWEIVRAEIMRSLYYSSTALQKRLRSEK.

The first 23 residues, 1–23 (MALPSSFLVALVALGCNSVCSLG), serve as a signal peptide directing secretion. 2 disulfides stabilise this stretch: Cys24/Cys123 and Cys52/Cys166. N-linked (GlcNAc...) asparagine glycosylation occurs at Asn102.

The protein belongs to the alpha/beta interferon family.

The protein resides in the secreted. Its function is as follows. Produced by macrophages, IFN-alpha have antiviral activities. Interferon stimulates the production of two enzymes: a protein kinase and an oligoadenylate synthetase. This is Interferon alpha from Felis catus (Cat).